The following is a 143-amino-acid chain: Nucleoside diphosphate kinase (143 aa).

ATP is bound by residues Lys11, Phe59, Arg87, Thr93, Arg104, and Asn114. His117 serves as the catalytic Pros-phosphohistidine intermediate.

Belongs to the NDK family. Homotetramer. It depends on Mg(2+) as a cofactor.

The protein resides in the cytoplasm. The catalysed reaction is a 2'-deoxyribonucleoside 5'-diphosphate + ATP = a 2'-deoxyribonucleoside 5'-triphosphate + ADP. It carries out the reaction a ribonucleoside 5'-diphosphate + ATP = a ribonucleoside 5'-triphosphate + ADP. Its function is as follows. Major role in the synthesis of nucleoside triphosphates other than ATP. The ATP gamma phosphate is transferred to the NDP beta phosphate via a ping-pong mechanism, using a phosphorylated active-site intermediate. The sequence is that of Nucleoside diphosphate kinase from Pseudoalteromonas atlantica (strain T6c / ATCC BAA-1087).